We begin with the raw amino-acid sequence, 196 residues long: HTH-type transcriptional regulator UidR (196 aa).

The HTH tetR-type domain maps to 10 to 70 (QPTRTRILNA…AIILQDQERA (61 aa)). Residues 33–52 (SMKAICKSCAISPGTLYHHF) constitute a DNA-binding region (H-T-H motif).

Functionally, repressor for the uidRABC (gusRABC) operon. This is HTH-type transcriptional regulator UidR (uidR) from Escherichia coli O157:H7.